A 500-amino-acid polypeptide reads, in one-letter code: Putative glucokinase-2 (500 aa).

The residue at position 2 (Ser2) is an N-acetylserine. Ser2 is subject to Phosphoserine. The 487-residue stretch at 12–498 (EALEDAVVEI…SGVGAALCAL (487 aa)) folds into the Hexokinase domain. Positions 74–217 (NGTERGVLLA…LSMINVVALT (144 aa)) are hexokinase small subdomain. Lys110 serves as a coordination point for ATP. Residues 159–185 (KMGFTFSYPVDQTSLSSGTLIRWTKSF) form a glucose-binding region. A hexokinase large subdomain region spans residues 218–487 (NDTVGTFLSH…RKIHLRLAKD (270 aa)). Ser470 is subject to Phosphoserine. Residue 487 to 492 (DGSGVG) participates in ATP binding.

The protein belongs to the hexokinase family.

It is found in the cytoplasm. The catalysed reaction is D-glucose + ATP = D-glucose 6-phosphate + ADP + H(+). It participates in carbohydrate degradation; glycolysis; D-glyceraldehyde 3-phosphate and glycerone phosphate from D-glucose: step 1/4. Its function is as follows. Putative glucokinase involved in phosphorylation of aldohexoses and glucose uptake. Involved in sporulation. Required for the full activation of the early meiotic inducer IME1. The sequence is that of Putative glucokinase-2 (EMI2) from Saccharomyces cerevisiae (strain ATCC 204508 / S288c) (Baker's yeast).